Reading from the N-terminus, the 548-residue chain is CBS domain-containing protein CBSCBSPB4 (548 aa).

Polar residues predominate over residues 1 to 18 (MANQGGPSRKSLSFSGHS). The segment at 1 to 58 (MANQGGPSRKSLSFSGHSFQGRKKASENEGGGGGGSDLLPRRSLTSSRSSISLSGERS) is disordered. At Ser18 the chain carries Phosphoserine. The span at 37–56 (DLLPRRSLTSSRSSISLSGE) shows a compositional bias: low complexity. CBS domains lie at 63–126 (VKRL…NLEE), 133–190 (MTKN…ERSV), 233–293 (IIPE…LPQE), and 301–358 (MTPN…AGST). Residues 411 to 498 (PNTFAFKLQD…KGLKLHLDYT (88 aa)) form the PB1 domain. Residues 521–543 (AAAYKTVAAGAALAAGLGVLVYL) traverse the membrane as a helical segment.

Its subcellular location is the membrane. The protein is CBS domain-containing protein CBSCBSPB4 (CBSCBSPB4) of Arabidopsis thaliana (Mouse-ear cress).